The sequence spans 218 residues: Large ribosomal subunit protein uL3 (218 aa).

Belongs to the universal ribosomal protein uL3 family. In terms of assembly, part of the 50S ribosomal subunit. Forms a cluster with proteins L14 and L19.

In terms of biological role, one of the primary rRNA binding proteins, it binds directly near the 3'-end of the 23S rRNA, where it nucleates assembly of the 50S subunit. This chain is Large ribosomal subunit protein uL3, found in Corynebacterium diphtheriae (strain ATCC 700971 / NCTC 13129 / Biotype gravis).